We begin with the raw amino-acid sequence, 167 residues long: Peptide deformylase (167 aa).

Residues Cys-91 and His-133 each contribute to the Fe cation site. Glu-134 is an active-site residue. Residue His-137 participates in Fe cation binding.

It belongs to the polypeptide deformylase family. Fe(2+) serves as cofactor.

It catalyses the reaction N-terminal N-formyl-L-methionyl-[peptide] + H2O = N-terminal L-methionyl-[peptide] + formate. Functionally, removes the formyl group from the N-terminal Met of newly synthesized proteins. Requires at least a dipeptide for an efficient rate of reaction. N-terminal L-methionine is a prerequisite for activity but the enzyme has broad specificity at other positions. This Neisseria meningitidis serogroup C (strain 053442) protein is Peptide deformylase.